The following is a 474-amino-acid chain: Microtubule protein alp7 (474 aa).

Positions 1 to 20 are enriched in low complexity; that stretch reads MSDIVSSSTDYSRRSPSSSS. Disordered stretches follow at residues 1–79, 93–114, and 164–223; these read MSDI…DTLN, KSFDFSGTPRPMHPISHPLSQH, and SLQT…NSTQ. The residue at position 17 (Ser-17) is a Phosphoserine. A compositionally biased stretch (basic and acidic residues) spans 25 to 36; that stretch reads ETDHTGFHEKRQ. A compositionally biased stretch (polar residues) spans 66–76; the sequence is SKPNPQLNLKD. Composition is skewed to polar residues over residues 177-189 and 201-223; these read SNGSFPRQTNTAP and RNSATPSTSQADIPTQYPINSTQ. Coiled-coil stretches lie at residues 219 to 273 and 367 to 471; these read INST…QLRS and KISN…LNLE.

Interacts with alp14.

It is found in the nucleus. The protein resides in the cytoplasm. It localises to the cytoskeleton. The protein localises to the spindle. Its subcellular location is the chromosome. It is found in the centromere. The protein resides in the kinetochore. Required for bipolar spindle formation and proper chromosome segregation. Has an indirect role in connecting the kinetochores and the plus end of pole to chromosome microtubules by targeting alp14 to the spindle pole body. Involved in the emergence of large microtubule organizing centers (MTOC) in interphase cells. Attaches to the minus ends of microtubules and associates with the sites of microtubule attachment on the nuclear envelope. This leads to the stabilization of the microtubule bundles. This Schizosaccharomyces pombe (strain 972 / ATCC 24843) (Fission yeast) protein is Microtubule protein alp7 (alp7).